A 121-amino-acid chain; its full sequence is Alpha-endosulfine (121 aa).

The interval 1 to 53 (MSQKQEEENPAEETGEEKQDTQEKEGILPEKAEEAKLKAKYPSLGQKPGGSDF) is disordered. Ser2 carries the N-acetylserine modification. The residue at position 2 (Ser2) is a Phosphoserine. The segment covering 16–37 (EEKQDTQEKEGILPEKAEEAKL) has biased composition (basic and acidic residues). Thr21 is modified (phosphothreonine). Phosphoserine is present on Ser43. The residue at position 67 (Ser67) is a Phosphoserine; by GWL. Residues 79-121 (NKQLPSAGPDKNLVTGDHIPTPQDLPQRKSSLVTSKLAGGQVE) are disordered. A Phosphoserine; by PKA modification is found at Ser109.

Belongs to the endosulfine family. Interacts (when phosphorylated at Ser-67) with PPP2R2D. Interacts with ABCC8. Interacts with SNCA; interaction is disrupted when phosphorylated at Ser-109. Post-translationally, phosphorylation at Ser-67 by GWL during mitosis is essential for interaction with PPP2R2D (PR55-delta) and subsequent inactivation of PP2A. Phosphorylated by PKA.

It localises to the cytoplasm. Protein phosphatase inhibitor that specifically inhibits protein phosphatase 2A (PP2A) during mitosis. When phosphorylated at Ser-67 during mitosis, specifically interacts with PPP2R2D (PR55-delta) and inhibits its activity, leading to inactivation of PP2A, an essential condition to keep cyclin-B1-CDK1 activity high during M phase. Also acts as a stimulator of insulin secretion by interacting with sulfonylurea receptor (ABCC8), thereby preventing sulfonylurea from binding to its receptor and reducing K(ATP) channel currents. The protein is Alpha-endosulfine (ENSA) of Bos taurus (Bovine).